A 477-amino-acid polypeptide reads, in one-letter code: MSHFEAVIGLEVHVQLGTKSKLFCSCPTTFGTPPNTNICEICAGMPGALPSLNKLAVEYAVKAGLALHCTINTHSFFSRKNYFYPDLPNGYQISQGTHALCTSGYLDLTIKNNNKRIGIHQIHLENDAGKSIHSPHENKSFIDLNRAGVPLIEIVSKPDINTPSEAVAYLKSLHAIVTYLGISDGNMEEGNFRCDANISLRPYNSKHLGTRTEIKNLNSFRNVQRALEFEINRQQDILEDGKTIIQETRLYNSDKDITTPMRDKETAHDYRYFPDPDLVPIYVTIQEIEKWKGEIPELSDSRQKRFVIEWGLAHQDAEILTSSRELADFFEKAVKLYPKPKKIANLIKILLLHMLNEHNITIQQCTMKPEAIAELAAIIDENLISIKIAHDIFEDLFSKQLMPKDYVIKHGLTQISDTKTIDTIVVEVLAENPTEVAAYKNGKTKLLSFFIGQVMKKMQGQANPALVNQALHNILSK.

This sequence belongs to the GatB/GatE family. GatB subfamily. As to quaternary structure, heterotrimer of A, B and C subunits.

The catalysed reaction is L-glutamyl-tRNA(Gln) + L-glutamine + ATP + H2O = L-glutaminyl-tRNA(Gln) + L-glutamate + ADP + phosphate + H(+). It carries out the reaction L-aspartyl-tRNA(Asn) + L-glutamine + ATP + H2O = L-asparaginyl-tRNA(Asn) + L-glutamate + ADP + phosphate + 2 H(+). Functionally, allows the formation of correctly charged Asn-tRNA(Asn) or Gln-tRNA(Gln) through the transamidation of misacylated Asp-tRNA(Asn) or Glu-tRNA(Gln) in organisms which lack either or both of asparaginyl-tRNA or glutaminyl-tRNA synthetases. The reaction takes place in the presence of glutamine and ATP through an activated phospho-Asp-tRNA(Asn) or phospho-Glu-tRNA(Gln). This is Aspartyl/glutamyl-tRNA(Asn/Gln) amidotransferase subunit B from Lawsonia intracellularis (strain PHE/MN1-00).